Reading from the N-terminus, the 337-residue chain is MNLLPFDEQKPLDFIAVGRLCIDLNANEIHRPMEETVTFTKYVGGSPANIAIGMARLGMKTGFIGRVADDQMGRFIVQYLKNNGIDTSHVITDKSGSVTGLAFTEIKSPTDCSILMYRDNVADLKLEPNDIHEDYIRQAKCLLISGTALAKSPSREAVFLALEYARRHGVVVFFDLDYRPYTWQSKEETAIYYNLAAEKCDVIIGTREEFDMMEQFAVHQHDDEKTAQKWFDYHAKIVVIKHGKDGSIAYTKTGETFVGTIFPANIVKTFGAGDSYAAGFIYGLMNGWPIPKAMEYGAAAASIVISSHSCSDAMPTLDQIEQFIQHIKAARPLQNHK.

It belongs to the carbohydrate kinase PfkB family.

The enzyme catalyses 5-dehydro-2-deoxy-D-gluconate + ATP = 6-phospho-5-dehydro-2-deoxy-D-gluconate + ADP + H(+). Its pathway is polyol metabolism; myo-inositol degradation into acetyl-CoA; acetyl-CoA from myo-inositol: step 5/7. Its function is as follows. Catalyzes the phosphorylation of 5-dehydro-2-deoxy-D-gluconate (2-deoxy-5-keto-D-gluconate or DKG) to 6-phospho-5-dehydro-2-deoxy-D-gluconate (DKGP). The chain is 5-dehydro-2-deoxygluconokinase from Geobacillus thermodenitrificans (strain NG80-2).